Consider the following 748-residue polypeptide: Elongation factor G, mitochondrial (748 aa).

Residues 1-14 (MTISSFLRVRHSLA) constitute a mitochondrion transit peptide. The region spanning 40–318 (ERIRNIGISA…VLNYLPHPGE (279 aa)) is the tr-type G domain. GTP is bound by residues 49-56 (AHIDSGKT), 116-120 (DTPGH), and 170-173 (NKLD).

The protein belongs to the TRAFAC class translation factor GTPase superfamily. Classic translation factor GTPase family. EF-G/EF-2 subfamily.

It is found in the mitochondrion. It participates in protein biosynthesis; polypeptide chain elongation. Mitochondrial GTPase that catalyzes the GTP-dependent ribosomal translocation step during translation elongation. During this step, the ribosome changes from the pre-translocational (PRE) to the post-translocational (POST) state as the newly formed A-site-bound peptidyl-tRNA and P-site-bound deacylated tRNA move to the P and E sites, respectively. Catalyzes the coordinated movement of the two tRNA molecules, the mRNA and conformational changes in the ribosome. The protein is Elongation factor G, mitochondrial of Aedes aegypti (Yellowfever mosquito).